The primary structure comprises 414 residues: Imidazolonepropionase (414 aa).

2 residues coordinate Fe(3+): His95 and His97. Residues His95 and His97 each contribute to the Zn(2+) site. 4-imidazolone-5-propanoate contacts are provided by Arg104, Tyr162, and His189. Tyr162 is an N-formimidoyl-L-glutamate binding site. Position 252 (His252) interacts with Fe(3+). Residue His252 participates in Zn(2+) binding. Gln255 contributes to the 4-imidazolone-5-propanoate binding site. A Fe(3+)-binding site is contributed by Asp326. Asp326 contributes to the Zn(2+) binding site. The N-formimidoyl-L-glutamate site is built by Asn328 and Gly330. Ser331 serves as a coordination point for 4-imidazolone-5-propanoate.

This sequence belongs to the metallo-dependent hydrolases superfamily. HutI family. Zn(2+) is required as a cofactor. It depends on Fe(3+) as a cofactor.

The protein localises to the cytoplasm. It catalyses the reaction 4-imidazolone-5-propanoate + H2O = N-formimidoyl-L-glutamate. Its pathway is amino-acid degradation; L-histidine degradation into L-glutamate; N-formimidoyl-L-glutamate from L-histidine: step 3/3. Functionally, catalyzes the hydrolytic cleavage of the carbon-nitrogen bond in imidazolone-5-propanoate to yield N-formimidoyl-L-glutamate. It is the third step in the universal histidine degradation pathway. This chain is Imidazolonepropionase, found in Streptomyces avermitilis (strain ATCC 31267 / DSM 46492 / JCM 5070 / NBRC 14893 / NCIMB 12804 / NRRL 8165 / MA-4680).